A 109-amino-acid chain; its full sequence is Iron-sulfur cluster assembly protein CyaY (109 aa).

It belongs to the frataxin family.

Involved in iron-sulfur (Fe-S) cluster assembly. May act as a regulator of Fe-S biogenesis. This Burkholderia lata (strain ATCC 17760 / DSM 23089 / LMG 22485 / NCIMB 9086 / R18194 / 383) protein is Iron-sulfur cluster assembly protein CyaY.